A 303-amino-acid chain; its full sequence is Probable WRKY transcription factor 30 (303 aa).

Residues 65-92 (DQVSQGGGSPKSDDSDQEPLVIKSSKKS) form a disordered region. Positions 107 to 175 (GVDRTLDDGF…YRGIHSCSQA (69 aa)) form a DNA-binding region, WRKY. The segment covering 266 to 278 (SGSASHSASNSPS) has biased composition (low complexity). Positions 266–291 (SGSASHSASNSPSTVPLESPFESYDP) are disordered.

The protein belongs to the WRKY group III family. As to quaternary structure, interacts with WRKY53, WRKY54 and WRKY70.

Its subcellular location is the nucleus. Transcription factor. Interacts specifically with the W box (5'-(T)TGAC[CT]-3'), a frequently occurring elicitor-responsive cis-acting element. The sequence is that of Probable WRKY transcription factor 30 from Arabidopsis thaliana (Mouse-ear cress).